Consider the following 290-residue polypeptide: Arginine and glutamate-rich protein 1 (290 aa).

Residues 1-10 (MGSRSRTPSP) are compositionally biased toward polar residues. Disordered regions lie at residues 1–137 (MGSR…AKEL), 193–216 (ERRR…KREE), and 249–290 (MDEE…PGAL). A compositionally biased stretch (basic residues) spans 12–28 (GKRRHHKSKHKKRSKSH). Composition is skewed to basic and acidic residues over residues 29–44 (HDHE…DKSS) and 53–76 (RERD…DYRH). 2 positions are modified to phosphoserine: Ser77 and Ser79. Low complexity predominate over residues 88-99 (SSSSSDSQYSEQ). Positions 111–269 (FKKLDEQNQM…QEKRVKEEQK (159 aa)) form a coiled coil. A compositionally biased stretch (basic and acidic residues) spans 124 to 137 (RLAEMERQRRAKEL). Over residues 249 to 269 (MDEERQRMRKEQEKRVKEEQK) the composition is skewed to basic and acidic residues.

It belongs to the ARGLU1 family. In terms of assembly, associates with the U1-snRNP complex; the interaction is enhanced by binding of Arglu1 to a stable intronic sequence RNA (sisRNA) produced from the Arglu1 gene by premature cleavage.

The protein localises to the nucleus. The protein resides in the nucleus speckle. In terms of biological role, post-transcriptional regulator of gene expression; modulates splicing and premature cleavage at cryptic polyadenylation sites of its own pre-mRNA through binding and regulation of the U1-snRNP complex. The sequence is that of Arginine and glutamate-rich protein 1 from Drosophila melanogaster (Fruit fly).